Consider the following 71-residue polypeptide: Small, acid-soluble spore protein I (71 aa).

This sequence belongs to the SspI family.

The protein localises to the spore core. The chain is Small, acid-soluble spore protein I from Bacillus velezensis (strain DSM 23117 / BGSC 10A6 / LMG 26770 / FZB42) (Bacillus amyloliquefaciens subsp. plantarum).